The primary structure comprises 247 residues: Carboxy-S-adenosyl-L-methionine synthase (247 aa).

Residues Tyr39, 64–66 (GCS), 89–90 (DN), 117–118 (DI), Asn132, and Arg199 contribute to the S-adenosyl-L-methionine site.

The protein belongs to the class I-like SAM-binding methyltransferase superfamily. Cx-SAM synthase family. Homodimer.

The catalysed reaction is prephenate + S-adenosyl-L-methionine = carboxy-S-adenosyl-L-methionine + 3-phenylpyruvate + H2O. In terms of biological role, catalyzes the conversion of S-adenosyl-L-methionine (SAM) to carboxy-S-adenosyl-L-methionine (Cx-SAM). This chain is Carboxy-S-adenosyl-L-methionine synthase, found in Klebsiella pneumoniae subsp. pneumoniae (strain ATCC 700721 / MGH 78578).